A 135-amino-acid polypeptide reads, in one-letter code: Large ribosomal subunit protein eL27x (135 aa).

It belongs to the eukaryotic ribosomal protein eL27 family.

This is Large ribosomal subunit protein eL27x (RPL27C) from Arabidopsis thaliana (Mouse-ear cress).